Reading from the N-terminus, the 491-residue chain is Anhydromuropeptide permease (491 aa).

Over 1–11 (MSSQYLRIFQQ) the chain is Cytoplasmic. A helical membrane pass occupies residues 12-32 (PRSAILLILGFASGLPLALTS). The Periplasmic segment spans residues 33-47 (GTLQAWMTVENIDLK). The helical transmembrane segment at 48–61 (TIGFFSLVGQAYVF) threads the bilayer. At 62-81 (KFLWSPLMDRYTPPFFGRRR) the chain is on the cytoplasmic side. A helical transmembrane segment spans residues 82 to 105 (GWLLATQILLLVAIAAMGFLEPGT). Residue glutamine 106 is a topological domain, periplasmic. The chain crosses the membrane as a helical span at residues 107–124 (LRWMAALAVVIAFCSASQ). Topologically, residues 125–221 (DIVFDAWKTD…VAPLRDFFGR (97 aa)) are cytoplasmic. A helical transmembrane segment spans residues 222 to 240 (NNAWLILLLIVLYKLGDAF). Residues 241 to 264 (AMSLTTTFLIRGVGFDAGEVGVVN) are Periplasmic-facing. The helical transmembrane segment at 265 to 284 (KTLGLLATIVGALYGGILMQ) threads the bilayer. The Cytoplasmic portion of the chain corresponds to 285 to 287 (RLS). A helical transmembrane segment spans residues 288-303 (LFRALLIFGILQGASN). Topologically, residues 304–327 (AGYWLLSITDKHLYSMGAAVFFEN) are periplasmic. Residues 328-346 (LCGGMGTSAFVALLMTLCN) traverse the membrane as a helical segment. At 347–421 (KSFSATQFAL…NDNFISRTAY (75 aa)) the chain is on the cytoplasmic side. A helical membrane pass occupies residues 422–453 (PAGYAFAMWTLAAGVSLLAVWLLLLTMDALDL). The Periplasmic portion of the chain corresponds to 454 to 457 (THFS). Residues 458–485 (FLPALLEVGVLVALSGVVLGGLLDYLAL) traverse the membrane as a helical segment. Residues 486–491 (RKTHLT) are Cytoplasmic-facing.

The protein belongs to the major facilitator superfamily.

The protein localises to the cell inner membrane. Functionally, permease involved in cell wall peptidoglycan recycling. Transports, from the periplasm into the cytoplasm, the disaccharide N-acetylglucosaminyl-beta-1,4-anhydro-N-acetylmuramic acid (GlcNAc-anhMurNAc) and GlcNAc-anhMurNAc-peptides. Transport is dependent on the proton motive force. In Escherichia coli O157:H7, this protein is Anhydromuropeptide permease (ampG).